Consider the following 328-residue polypeptide: Sin3 histone deacetylase corepressor complex component SDS3 (328 aa).

The tract at residues 1–64 (MSAAALLAPA…TDLAKHDEED (64 aa)) is disordered. Residue S2 is modified to N-acetylserine. A mediates interaction with USP17L2 region spans residues 2 to 170 (SAAALLAPAP…IENEKLTMEL (169 aa)). Positions 10–21 (APAPAGAPPAPE) are enriched in pro residues. 2 stretches are compositionally biased toward acidic residues: residues 23-37 (YPEE…EDDE) and 45-54 (SDEDTEDASE). Phosphoserine occurs at positions 32 and 45. T49 is subject to Phosphothreonine. S53 carries the phosphoserine modification. Residues 64 to 171 (DFVEMKEQMY…ENEKLTMELT (108 aa)) are a coiled coil. Glycyl lysine isopeptide (Lys-Gly) (interchain with G-Cter in SUMO2) cross-links involve residues K69, K178, and K201. A disordered region spans residues 226–252 (LKSPKRPASPSSPEHLPTTPAESPAQR). 3 positions are modified to phosphoserine: S228, S234, and S237. T244 is modified (phosphothreonine).

This sequence belongs to the SDS3 family. Homodimer. Component of the SIN3 histone deacetylase (HDAC) corepressor complex. Interacts with SIN3A. Interaction with SIN3B enhances the interaction between SIN3B and HDAC1 to form a complex. Interacts with HCFC1. Component of a mSin3A corepressor complex that contains SIN3A, SAP130, SUDS3/SAP45, ARID4B/SAP180, HDAC1 and HDAC2. Interacts with USP17L2; the interaction is direct. Interacts with FOXK2. In terms of processing, polyubiquitinated. 'Lys-63'-polyubiquitinated SUDS3 positively regulates histone deacetylation. Regulated through deubiquitination by USP17L2/USP17 that cleaves 'Lys-63'-linked ubiquitin chains.

The protein localises to the nucleus. Its function is as follows. Regulatory protein which represses transcription and augments histone deacetylase activity of HDAC1. May have a potential role in tumor suppressor pathways through regulation of apoptosis. May function in the assembly and/or enzymatic activity of the mSin3A corepressor complex or in mediating interactions between the complex and other regulatory complexes. The protein is Sin3 histone deacetylase corepressor complex component SDS3 (SUDS3) of Bos taurus (Bovine).